Consider the following 299-residue polypeptide: Probable tyrosine phosphatase protein J4 (299 aa).

Residues 16–289 (VEALDFLSFM…VYCYQALYVW (274 aa)) form the Tyrosine-protein phosphatase domain. Residue Cys-230 is the Phosphocysteine intermediate of the active site.

Belongs to the protein-tyrosine phosphatase family.

The catalysed reaction is O-phospho-L-tyrosyl-[protein] + H2O = L-tyrosyl-[protein] + phosphate. The polypeptide is Probable tyrosine phosphatase protein J4 (J5) (Microplitis demolitor bracovirus (isolate Webb) (MdBV)).